A 200-amino-acid chain; its full sequence is Glycerol-3-phosphate acyltransferase (200 aa).

4 consecutive transmembrane segments (helical) span residues 4 to 24 (ALLAVLGGYLLGSIPTGYWVG), 70 to 90 (ALGSALGSAWWVVLAALFAVI), 110 to 130 (LGILLAMAWPVALTTFGVWLL), and 158 to 178 (QPLPYLLFALAGGVYVIGAHR).

The protein belongs to the PlsY family. Probably interacts with PlsX.

Its subcellular location is the cell inner membrane. The enzyme catalyses an acyl phosphate + sn-glycerol 3-phosphate = a 1-acyl-sn-glycero-3-phosphate + phosphate. It participates in lipid metabolism; phospholipid metabolism. Catalyzes the transfer of an acyl group from acyl-phosphate (acyl-PO(4)) to glycerol-3-phosphate (G3P) to form lysophosphatidic acid (LPA). This enzyme utilizes acyl-phosphate as fatty acyl donor, but not acyl-CoA or acyl-ACP. The protein is Glycerol-3-phosphate acyltransferase of Synechococcus sp. (strain JA-2-3B'a(2-13)) (Cyanobacteria bacterium Yellowstone B-Prime).